The sequence spans 214 residues: Adenylate kinase (214 aa).

Residue 10–15 participates in ATP binding; it reads GAGKGT. An NMP region spans residues 30–59; it reads STGDIFRANIKGNTPLGQKAKEYMDKGELV. Residues threonine 31, arginine 36, 57–59, 85–88, and glutamine 92 contribute to the AMP site; these read ELV and GFPR. Residues 126-163 are LID; that stretch reads GRRVCTNCGATYNVVFNPTKVEGICDVCNSPVIQRADD. Arginine 127 is an ATP binding site. Cysteine 130 and cysteine 133 together coordinate Zn(2+). Position 136-137 (136-137) interacts with ATP; it reads TY. The Zn(2+) site is built by cysteine 150 and cysteine 153. The AMP site is built by arginine 160 and arginine 171. Glycine 199 is a binding site for ATP.

The protein belongs to the adenylate kinase family. As to quaternary structure, monomer.

The protein localises to the cytoplasm. It catalyses the reaction AMP + ATP = 2 ADP. Its pathway is purine metabolism; AMP biosynthesis via salvage pathway; AMP from ADP: step 1/1. In terms of biological role, catalyzes the reversible transfer of the terminal phosphate group between ATP and AMP. Plays an important role in cellular energy homeostasis and in adenine nucleotide metabolism. In Ruminiclostridium cellulolyticum (strain ATCC 35319 / DSM 5812 / JCM 6584 / H10) (Clostridium cellulolyticum), this protein is Adenylate kinase.